Consider the following 344-residue polypeptide: MTPITPQEALQRTIEHREIFHDEMLHLMRMIMSGELSPVMTAAITTGLRVKKETIGEITAAAQVMREFSHKVQVHDTKHLVDIVGTGGDGANTFNISTCATFVIAAAGAKVSKHGGRSVSSKSGSADAMEALGVHINLQPAQIAQCIGDVGIGFMFAPNHHPAMKNVAPVRKELGVRTIFNILGPLTNPAGAPNILMGVFHEDLVGIQVRALQRLGAEHALVVYGRDGLDEISLGAGTLVGELKDGAVREYEIHPEDFGLRMAGTRALRVENPTESKAMLMGVLQGDEGPARDIVCLNAGAALYAANVADSLEDGLRRAQQALASGAALAKLQQLVAYTQKLAA.

5-phospho-alpha-D-ribose 1-diphosphate is bound by residues Gly85, 88–89 (GD), Thr93, 95–98 (NIST), 113–121 (KHGGRSVSS), and Ser125. Gly85 is an anthranilate binding site. Mg(2+) is bound at residue Ser97. Arg171 contacts anthranilate. Mg(2+) contacts are provided by Asp230 and Glu231.

The protein belongs to the anthranilate phosphoribosyltransferase family. In terms of assembly, homodimer. It depends on Mg(2+) as a cofactor.

It carries out the reaction N-(5-phospho-beta-D-ribosyl)anthranilate + diphosphate = 5-phospho-alpha-D-ribose 1-diphosphate + anthranilate. Its pathway is amino-acid biosynthesis; L-tryptophan biosynthesis; L-tryptophan from chorismate: step 2/5. Catalyzes the transfer of the phosphoribosyl group of 5-phosphorylribose-1-pyrophosphate (PRPP) to anthranilate to yield N-(5'-phosphoribosyl)-anthranilate (PRA). The polypeptide is Anthranilate phosphoribosyltransferase (Acidovorax ebreus (strain TPSY) (Diaphorobacter sp. (strain TPSY))).